The chain runs to 119 residues: Autophagy-related protein 8B (119 aa).

Gly117 is lipidated: Phosphatidylethanolamine amidated glycine. Positions Leu118–Leu119 are cleaved as a propeptide — removed in mature form.

The protein belongs to the ATG8 family. In terms of assembly, interacts with ATG4. Post-translationally, the C-terminal 2 residues are removed by ATG4 to expose Gly-117 at the C-terminus. The C-terminal Gly is then amidated with phosphatidylethanolamine by an activating system similar to that for ubiquitin.

It is found in the cytoplasmic vesicle. The protein resides in the autophagosome membrane. It localises to the vacuole membrane. Its subcellular location is the cytoplasm. The protein localises to the cytoskeleton. Ubiquitin-like modifier involved in autophagosomes formation. May mediate the delivery of the autophagosomes to the vacuole via the microtubule cytoskeleton. This is Autophagy-related protein 8B (ATG8B) from Oryza sativa subsp. indica (Rice).